A 354-amino-acid polypeptide reads, in one-letter code: Uroporphyrinogen decarboxylase (354 aa).

Substrate is bound by residues 27 to 31 (RQAGR), aspartate 77, tyrosine 154, serine 209, and histidine 327.

This sequence belongs to the uroporphyrinogen decarboxylase family. As to quaternary structure, homodimer.

The protein resides in the cytoplasm. It catalyses the reaction uroporphyrinogen III + 4 H(+) = coproporphyrinogen III + 4 CO2. It participates in porphyrin-containing compound metabolism; protoporphyrin-IX biosynthesis; coproporphyrinogen-III from 5-aminolevulinate: step 4/4. Its function is as follows. Catalyzes the decarboxylation of four acetate groups of uroporphyrinogen-III to yield coproporphyrinogen-III. This chain is Uroporphyrinogen decarboxylase, found in Shewanella loihica (strain ATCC BAA-1088 / PV-4).